Reading from the N-terminus, the 537-residue chain is Phosphoenolpyruvate carboxykinase (ATP) (537 aa).

3 residues coordinate substrate: Arg61, Tyr195, and Lys201. Residues Lys201, His220, and 236-244 each bind ATP; that span reads GLSGTGKTT. Residues Lys201 and His220 each contribute to the Mn(2+) site. A Mn(2+)-binding site is contributed by Asp257. Residue Glu285 coordinates ATP. A compositionally biased stretch (basic and acidic residues) spans 312–321; the sequence is DFNDGSKTEN. The segment at 312–339 is disordered; the sequence is DFNDGSKTENTRSAYPLESIPNASPTGR. Position 323 (Arg323) interacts with substrate. Arg323 and Thr448 together coordinate ATP.

The protein belongs to the phosphoenolpyruvate carboxykinase (ATP) family. The cofactor is Mn(2+).

The protein localises to the cytoplasm. The catalysed reaction is oxaloacetate + ATP = phosphoenolpyruvate + ADP + CO2. Its pathway is carbohydrate biosynthesis; gluconeogenesis. Involved in the gluconeogenesis. Catalyzes the conversion of oxaloacetate (OAA) to phosphoenolpyruvate (PEP) through direct phosphoryl transfer between the nucleoside triphosphate and OAA. This is Phosphoenolpyruvate carboxykinase (ATP) from Rhodopseudomonas palustris (strain BisB18).